The following is a 250-amino-acid chain: 2,3-bisphosphoglycerate-dependent phosphoglycerate mutase (250 aa).

Residues R10–N17, T23–G24, R62, E89–Y92, K100, R116–R117, and G185–N186 contribute to the substrate site. The Tele-phosphohistidine intermediate role is filled by H11. Catalysis depends on E89, which acts as the Proton donor/acceptor.

This sequence belongs to the phosphoglycerate mutase family. BPG-dependent PGAM subfamily. Homodimer.

The catalysed reaction is (2R)-2-phosphoglycerate = (2R)-3-phosphoglycerate. Its pathway is carbohydrate degradation; glycolysis; pyruvate from D-glyceraldehyde 3-phosphate: step 3/5. Functionally, catalyzes the interconversion of 2-phosphoglycerate and 3-phosphoglycerate. The chain is 2,3-bisphosphoglycerate-dependent phosphoglycerate mutase from Cronobacter sakazakii (strain ATCC BAA-894) (Enterobacter sakazakii).